Here is a 326-residue protein sequence, read N- to C-terminus: MIDPLASPGSAPLIVIAGPTASGKSALALRVARRFNGVVINADSMQVYRDLRILSARPSVEDEAAAPHALYGVLDGAEVCSVGRWLALADGAVAAARAAGRLPILCGGTGLYLKAALEGLASVPEVAPEVRAEARELLAALGPAALHAKLAELDRAMAERLRPSDAQRIARAYEVVRGTGRSLMDWWSDPVATPALPGRPLLLVIDPPRAAQRAACDARLLAMVAAGALDELALLLARRLDPALPVMRAVGVPELARTLRGEVGLAEAVERAQGATRRYAKRQGTWIRTQLRPDRVLSESLVTQLSESQLTDIDNFLYAFLLTGAS.

18–25 is an ATP binding site; that stretch reads GPTASGKS. 20–25 lines the substrate pocket; sequence TASGKS. Interaction with substrate tRNA stretches follow at residues 43 to 46 and 167 to 171; these read DSMQ and QRIAR.

Belongs to the IPP transferase family. Monomer. Mg(2+) serves as cofactor.

The enzyme catalyses adenosine(37) in tRNA + dimethylallyl diphosphate = N(6)-dimethylallyladenosine(37) in tRNA + diphosphate. Its function is as follows. Catalyzes the transfer of a dimethylallyl group onto the adenine at position 37 in tRNAs that read codons beginning with uridine, leading to the formation of N6-(dimethylallyl)adenosine (i(6)A). This is tRNA dimethylallyltransferase from Rhodospirillum rubrum (strain ATCC 11170 / ATH 1.1.1 / DSM 467 / LMG 4362 / NCIMB 8255 / S1).